A 365-amino-acid chain; its full sequence is MEFSVEGTQFSPPVKRIFDTAGTHDFQKSLTMYRLQSHLERYLKLVQGQKIPKSSQNRAVVRFVCILERLDALMDETPPRTGSARRFGDLACRDWHDRMQGELDGLLETLLPEAARRSAAELRYYLGSAFGSRERLDYGTGHELAFLAVVVALDMLGLWTEDKFTGEDMLYVWARYYALVHRLILTYNLEPAGSHGVWGLDDHLHLAYILGASQWAQDRNVPMQPSDILDPKAVARYSETNLYCNSIAFLLRVKTGHFAQHSPMLHDIAQTVPTWSKVTTGLIKMYRVEVLNKFPVVQHFWFGTGFFPWVDMAHGMSLPNYEAPSETSEKPAAGTAHTTTTTMPPPRMTANCGYGPLGRLVTPRR.

The interval 321–349 is disordered; it reads YEAPSETSEKPAAGTAHTTTTTMPPPRMT. Low complexity predominate over residues 331 to 342; the sequence is PAAGTAHTTTTT.

It belongs to the PTPA-type PPIase family.

The protein localises to the cytoplasm. Its subcellular location is the nucleus. The catalysed reaction is [protein]-peptidylproline (omega=180) = [protein]-peptidylproline (omega=0). Its function is as follows. PPIases accelerate the folding of proteins. It catalyzes the cis-trans isomerization of proline imidic peptide bonds in oligopeptides. Acts as a regulatory subunit for PP2A-like phosphatases modulating their activity or substrate specificity, probably by inducing a conformational change in the catalytic subunit, a direct target of the PPIase. Can reactivate inactive phosphatase PP2A-phosphatase methylesterase complexes (PP2Ai) in presence of ATP and Mg(2+) by dissociating the inactive form from the complex. This is Serine/threonine-protein phosphatase 2A activator 1 (RRD1) from Eremothecium gossypii (strain ATCC 10895 / CBS 109.51 / FGSC 9923 / NRRL Y-1056) (Yeast).